Here is a 348-residue protein sequence, read N- to C-terminus: MELQSSEIRNAQAHFFTQVFSFTSMSSLKCAVQLGIPDAIHSHGKPMALSDLTNSLPINPSKAPYIYRLMRILVAAGYFSEEEKNVYSLTPFTRLLLKNDPLNSISMVLGVNQIAELKAWNAMSEWFQNEDLTAFETAHGKNFWDFGAEDKYGKNFDGVMAADSILVSKMLIPEFNYLFEGLDSLVDVGGGTGTIAKAIAKSFPDLKCTVFDLPHVVANLESTENLEFVGGDMFEKIPSANAILLKWILHDWKDEECVKVLKMCRKAIPEKEKGGKVILIETVLMDSKKHENEEAVKAQISSDIDMMVFFTAKERTEEEWATLFREAGFSGYKIFPMIDFRSPIEVYP.

At methionine 1 the chain carries N-acetylmethionine. 5 residues coordinate S-adenosyl-L-methionine: glycine 189, aspartate 212, aspartate 232, methionine 233, and lysine 246. Histidine 250 (proton acceptor) is an active-site residue.

The N-terminus is blocked.

The enzyme catalyses S-adenosyl-L-methionine + a 3'-hydroxyflavonoid = S-adenosyl-L-homocysteine + a 3'-methoxyflavonoid.. It catalyses the reaction S-adenosyl-L-methionine + a 5'-hydroxy-3'-methoxyflavonoid = S-adenosyl-L-homocysteine + a 3',5'-dimethoxyflavonoid.. Its function is as follows. Methylates myricetin and dihydromyricetin at 2 sites. Inactive towards 16-hydroxytabersonine, the phenylpropanoids 5-hydroxyferulate, caffeate and their CoA-esters, flavones and flavanones possessing 2 or 3 B-ring hydroxyl groups. The protein is Myricetin O-methyltransferase of Catharanthus roseus (Madagascar periwinkle).